The following is a 147-amino-acid chain: MRLEDLRPTPGSMKKRKRVGRGPGSGHGKTSGRGHKGQKARGTGKVHPWFEGGQTPLQRRLPKRGFKNINKKVYAVVNVKVLEEKFEANEEVTPAKLLERKIVKDMKDGIKILGDGELTKPLIVKAHAFSKSALEKIESVGGKAEVI.

A disordered region spans residues 1 to 57 (MRLEDLRPTPGSMKKRKRVGRGPGSGHGKTSGRGHKGQKARGTGKVHPWFEGGQTPL). Positions 30-44 (TSGRGHKGQKARGTG) are enriched in basic residues.

The protein belongs to the universal ribosomal protein uL15 family. Part of the 50S ribosomal subunit.

Binds to the 23S rRNA. The chain is Large ribosomal subunit protein uL15 from Thermotoga neapolitana (strain ATCC 49049 / DSM 4359 / NBRC 107923 / NS-E).